The chain runs to 649 residues: Putative cystathionine gamma-synthase YML082W (649 aa).

The interval 242–273 (NEANHGEDHDGGISGEVDSQEEPHNGLVSTIP) is disordered. Ser287 carries the phosphoserine modification. N6-(pyridoxal phosphate)lysine is present on Lys451.

The protein belongs to the trans-sulfuration enzymes family. MET7 subfamily. Pyridoxal 5'-phosphate serves as cofactor.

The enzyme catalyses O-succinyl-L-homoserine + L-cysteine = L,L-cystathionine + succinate + H(+). It participates in amino-acid biosynthesis; L-methionine biosynthesis via de novo pathway; L-cystathionine from O-succinyl-L-homoserine: step 1/1. In terms of biological role, catalyzes the formation of L-cystathionine from O-succinyl-L-homoserine (OSHS) and L-cysteine, via a gamma-replacement reaction. In the absence of thiol, catalyzes gamma-elimination to form 2-oxobutanoate, succinate and ammonia. This is Putative cystathionine gamma-synthase YML082W from Saccharomyces cerevisiae (strain ATCC 204508 / S288c) (Baker's yeast).